Here is a 435-residue protein sequence, read N- to C-terminus: N-lysine methyltransferase SMYD2-A (435 aa).

In terms of domain architecture, SET spans 7 to 241 (EGTERFLSPG…PEEEIFNSYI (235 aa)). 17-19 (KGR) serves as a coordination point for S-adenosyl-L-methionine. Positions 52, 55, 65, 68, 74, 78, 86, and 90 each coordinate Zn(2+). The MYND-type zinc finger occupies 52–90 (CECCFTRKEGLSKCGKCKQAYYCNVECQRGDWPMHKLEC). Residues histidine 137, 206 to 207 (NH), and 258 to 260 (YFF) contribute to the S-adenosyl-L-methionine site.

Belongs to the class V-like SAM-binding methyltransferase superfamily.

It is found in the cytoplasm. The protein resides in the cytosol. The protein localises to the nucleus. It catalyses the reaction L-lysyl(4)-[histone H3] + 3 S-adenosyl-L-methionine = N(6),N(6),N(6)-trimethyl-L-lysyl(4)-[histone H3] + 3 S-adenosyl-L-homocysteine + 3 H(+). It carries out the reaction L-lysyl-[protein] + S-adenosyl-L-methionine = N(6)-methyl-L-lysyl-[protein] + S-adenosyl-L-homocysteine + H(+). Functionally, protein-lysine N-methyltransferase that methylates both histones and non-histone proteins, including p53/TP53 and RB1. Specifically trimethylates histone H3 'Lys-4' (H3K4me3) in vivo. The activity requires interaction with HSP90alpha. Shows even higher methyltransferase activity on p53/TP53. Monomethylates 'Lys-370' of p53/TP53, leading to decreased DNA-binding activity and subsequent transcriptional regulation activity of p53/TP53. Monomethylates RB1 at 'Lys-860'. In Danio rerio (Zebrafish), this protein is N-lysine methyltransferase SMYD2-A (smyd2a).